The primary structure comprises 631 residues: Dolichyl-diphosphooligosaccharide--protein glycosyltransferase subunit 2 (631 aa).

An N-terminal signal peptide occupies residues 1–22 (MAPPGSSTVFLLALTIIASTWA). At 23–540 (LTPTHYLTKH…REPEKRPPTV (518 aa)) the chain is on the lumenal side. The N-linked (GlcNAc...) asparagine glycan is linked to N106. K154 participates in a covalent cross-link: Glycyl lysine isopeptide (Lys-Gly) (interchain with G-Cter in ubiquitin). A helical transmembrane segment spans residues 541 to 561 (VSNTFTALILSPLLLLFALWI). Topologically, residues 562–571 (RIGANVSNFT) are cytoplasmic. A helical transmembrane segment spans residues 572–592 (FAPSTIIFHLGHAAMLGLMYV). The Lumenal segment spans residues 593–596 (YWTQ). A helical transmembrane segment spans residues 597–617 (LNMFQTLKYLAILGSVTFLAG). Residues 618-631 (NRMLAQQAVKRTAH) lie on the Cytoplasmic side of the membrane.

Belongs to the SWP1 family. Component of the oligosaccharyltransferase (OST) complex. OST exists in two different complex forms which contain common core subunits RPN1, RPN2, OST48, OST4, DAD1 and TMEM258, either STT3A or STT3B as catalytic subunits, and form-specific accessory subunits. STT3A complex assembly occurs through the formation of 3 subcomplexes. Subcomplex 1 contains RPN1 and TMEM258, subcomplex 2 contains the STT3A-specific subunits STT3A, DC2/OSTC, and KCP2 as well as the core subunit OST4, and subcomplex 3 contains RPN2, DAD1, and OST48. The STT3A complex can form stable complexes with the Sec61 complex or with both the Sec61 and TRAP complexes. Interacts with DDI2. Interacts with TMEM35A/NACHO. Expressed in all tissues tested.

Its subcellular location is the endoplasmic reticulum. The protein localises to the endoplasmic reticulum membrane. It functions in the pathway protein modification; protein glycosylation. Subunit of the oligosaccharyl transferase (OST) complex that catalyzes the initial transfer of a defined glycan (Glc(3)Man(9)GlcNAc(2) in eukaryotes) from the lipid carrier dolichol-pyrophosphate to an asparagine residue within an Asn-X-Ser/Thr consensus motif in nascent polypeptide chains, the first step in protein N-glycosylation. N-glycosylation occurs cotranslationally and the complex associates with the Sec61 complex at the channel-forming translocon complex that mediates protein translocation across the endoplasmic reticulum (ER). All subunits are required for a maximal enzyme activity. The chain is Dolichyl-diphosphooligosaccharide--protein glycosyltransferase subunit 2 from Homo sapiens (Human).